The primary structure comprises 153 residues: UPF0756 membrane protein LCABL_15860 (153 aa).

The next 4 helical transmembrane spans lie at 4-24, 52-72, 85-105, and 115-135; these read WLFL…SLII, WGVT…EIGF, WIAI…VGLL, and LVFG…GPVI.

It belongs to the UPF0756 family.

The protein localises to the cell membrane. In Lacticaseibacillus casei (strain BL23) (Lactobacillus casei), this protein is UPF0756 membrane protein LCABL_15860.